We begin with the raw amino-acid sequence, 276 residues long: MGHTIKAPLTVQGVGLHSGVETTVTLCPVAAGKGRYFQRVDLPKKPIIPADLTWVREAMLSTELGEPGATIRTVEHLLATLVALDIGDLRIEVNGPEVPLLDGSALSWLTAIAKVGTRPRSKKSQDQPIVITDPLTCQLEDAFVAAFPCATTRFSYGVDYPYLPIGKQWYTWEPDQENFATAIAPARTFGFADQIEKLRQAGLIKGGSLENALVCDKEKWLNPPLRFPDEPVRHKLLDLLGDLSLLGKIPQAHFVAYKASHKLHTQLAQKIADTYR.

Zn(2+)-binding residues include His76, His234, and Asp238. His261 functions as the Proton donor in the catalytic mechanism.

The protein belongs to the LpxC family. Requires Zn(2+) as cofactor.

The enzyme catalyses a UDP-3-O-[(3R)-3-hydroxyacyl]-N-acetyl-alpha-D-glucosamine + H2O = a UDP-3-O-[(3R)-3-hydroxyacyl]-alpha-D-glucosamine + acetate. It participates in glycolipid biosynthesis; lipid IV(A) biosynthesis; lipid IV(A) from (3R)-3-hydroxytetradecanoyl-[acyl-carrier-protein] and UDP-N-acetyl-alpha-D-glucosamine: step 2/6. Its function is as follows. Catalyzes the hydrolysis of UDP-3-O-myristoyl-N-acetylglucosamine to form UDP-3-O-myristoylglucosamine and acetate, the committed step in lipid A biosynthesis. In Synechocystis sp. (strain ATCC 27184 / PCC 6803 / Kazusa), this protein is UDP-3-O-acyl-N-acetylglucosamine deacetylase.